The following is a 216-amino-acid chain: Adenylate kinase (216 aa).

10 to 15 provides a ligand contact to ATP; the sequence is GAGKGT. The segment at 30–59 is NMP; that stretch reads STGDIFRKNIKEGTELGKKAKEYMDQGLLV. Residues Thr31, Arg36, 57–59, 85–88, and Gln92 contribute to the AMP site; these read LLV and GFPR. Positions 126 to 163 are LID; it reads GRRICKSCGATYHVEFNPPKVEGVCDVCQGELYQRADD. Arg127 is a binding site for ATP. Zn(2+) contacts are provided by Cys130 and Cys133. 136–137 is an ATP binding site; sequence TY. Zn(2+) contacts are provided by Cys150 and Cys153. Positions 160 and 171 each coordinate AMP. Gln199 lines the ATP pocket.

It belongs to the adenylate kinase family. As to quaternary structure, monomer.

It localises to the cytoplasm. The enzyme catalyses AMP + ATP = 2 ADP. It participates in purine metabolism; AMP biosynthesis via salvage pathway; AMP from ADP: step 1/1. Catalyzes the reversible transfer of the terminal phosphate group between ATP and AMP. Plays an important role in cellular energy homeostasis and in adenine nucleotide metabolism. This chain is Adenylate kinase, found in Clostridioides difficile (strain 630) (Peptoclostridium difficile).